The primary structure comprises 143 residues: Large ribosomal subunit protein uL11 (143 aa).

It belongs to the universal ribosomal protein uL11 family. Part of the ribosomal stalk of the 50S ribosomal subunit. Interacts with L10 and the large rRNA to form the base of the stalk. L10 forms an elongated spine to which L12 dimers bind in a sequential fashion forming a multimeric L10(L12)X complex. In terms of processing, one or more lysine residues are methylated.

In terms of biological role, forms part of the ribosomal stalk which helps the ribosome interact with GTP-bound translation factors. The protein is Large ribosomal subunit protein uL11 of Ralstonia nicotianae (strain ATCC BAA-1114 / GMI1000) (Ralstonia solanacearum).